A 131-amino-acid chain; its full sequence is Hypocretin neuropeptide precursor (131 aa).

The N-terminal stretch at 1-33 (MNLPSTKVSWAAVTLLLLLLLLPPALLSSGAAA) is a signal peptide. Glutamine 34 is subject to Pyrrolidone carboxylic acid. 2 disulfides stabilise this stretch: cysteine 39/cysteine 45 and cysteine 40/cysteine 47. At leucine 66 the chain carries Leucine amide. Methionine 97 carries the methionine amide modification. Positions 98–131 (GRRAGAEPAPRPCLGRRCSAPAAASVAPGGQSGI) are cleaved as a propeptide — removed in mature form.

It belongs to the orexin family. Specific enzymatic cleavages at paired basic residues yield the different active peptides. Abundantly expressed in subthalamic nucleus but undetectable in other brain regions tested (hypothalamus was not tested) and in heart, placenta, lung, liver, skeletal muscle, kidney and pancreas.

It is found in the rough endoplasmic reticulum. Its subcellular location is the cytoplasmic vesicle. It localises to the synapse. Its function is as follows. Neuropeptides that play a significant role in the regulation of food intake and sleep-wakefulness, possibly by coordinating the complex behavioral and physiologic responses of these complementary homeostatic functions. A broader role in the homeostatic regulation of energy metabolism, autonomic function, hormonal balance and the regulation of body fluids, is also suggested. Binds to orexin receptors HCRTR1/OX1R and HCRTR2/OX2R with a high affinity. Stimulates food intake. Modulates pituitary luteinizing hormone secretion in an ovarian steroid-dependent manner. Functionally, binds to orexin receptor HCRTR2/OX2R only. Stimulates food intake. Modulates pituitary luteinizing hormone secretion in an ovarian steroid-dependent manner. The polypeptide is Hypocretin neuropeptide precursor (Homo sapiens (Human)).